Here is a 1412-residue protein sequence, read N- to C-terminus: Protein MODIFIER OF SNC1 1 (1412 aa).

6 disordered regions span residues Met1–Pro276, Gly384–Pro437, Gln472–Gln798, Asn827–Ile888, Asp909–Gly1144, and Ala1156–Asn1412. Residues Ser56–Ser103 show a composition bias toward polar residues. Ser72 carries the phosphoserine modification. The span at Ser109–Ser119 shows a compositional bias: low complexity. A compositionally biased stretch (polar residues) spans Arg120 to Val135. Basic and acidic residues-rich tracts occupy residues Ala197 to Arg207 and Ala236 to Leu267. Residues Arg478–Ala488 are compositionally biased toward basic and acidic residues. Polar residues-rich tracts occupy residues Lys517 to Val531, Gln539 to Ser553, Ser565 to Asn581, and Arg610 to Glu639. Over residues Asp665–Ile713 the composition is skewed to basic and acidic residues. Positions Lys667–Gly717 form a coiled coil. Composition is skewed to polar residues over residues Gly738–Glu749, Lys756–Asn779, and Gly829–Ser847. Over residues Pro850–His862 the composition is skewed to basic residues. Residues Val877–Ile888 show a composition bias toward basic and acidic residues. Residue Ser883 is modified to Phosphoserine. Polar residues-rich tracts occupy residues Gly914 to Ser938 and Gln983 to Ser1003. The segment covering Lys1006–Ala1023 has biased composition (basic and acidic residues). Residues Leu1056–Ser1070 show a composition bias toward polar residues. Positions Lys1071–Arg1084 are enriched in basic residues. The segment covering Phe1106–Asn1137 has biased composition (polar residues). 3 stretches are compositionally biased toward basic and acidic residues: residues Asp1191–Lys1202, Lys1222–Trp1232, and Gly1242–Pro1251. Composition is skewed to polar residues over residues Gly1266 to Ser1286 and Val1293 to Gln1307. Basic and acidic residues-rich tracts occupy residues Ser1338–Tyr1351 and Tyr1359–Lys1369. Positions Gln1384–Gly1397 are enriched in low complexity. Gly residues predominate over residues Gly1400–Asn1412.

As to quaternary structure, interacts with TCP14 and TCP15.

Its function is as follows. Involved in the regulation of the chromatin structure and DNA methylation at the SNC1 locus. Regulates the expression of SNC1 at chromatin level. The chain is Protein MODIFIER OF SNC1 1 (MOS1) from Arabidopsis thaliana (Mouse-ear cress).